The chain runs to 1544 residues: Lysine-specific demethylase 5B (1544 aa).

Residues 1 to 14 (MEPATTLPPGPRPA) show a composition bias toward pro residues. The segment at 1–22 (MEPATTLPPGPRPALPLGGPGP) is disordered. The 42-residue stretch at 32 to 73 (CPVFEPSWEEFADPFAFIHKIRPIAEQTGICKVRPPPDWQPP) folds into the JmjN domain. The 91-residue stretch at 97–187 (TRVKLNFLDQ…ILNPYNLFLS (91 aa)) folds into the ARID domain. Glycyl lysine isopeptide (Lys-Gly) (interchain with G-Cter in SUMO2) cross-links involve residues Lys-148, Lys-204, Lys-209, Lys-242, Lys-274, and Lys-278. The disordered stretch occupies residues 200-228 (TSDTKDKEYKPHDIPQRQSVQPAETCPPA). The span at 202–214 (DTKDKEYKPHDIP) shows a compositional bias: basic and acidic residues. The segment at 269-297 (NEKEMKSTIKQEPTEKKDCELESEKEKPK) is disordered. Residues 309-359 (LYVCLLCGSGNDEDRLLLCDGCDDSYHTFCLVPPLHDVPKGDWRCPKCLAQ) form a PHD-type 1 zinc finger. Tyr-425 contributes to the 2-oxoglutarate binding site. The 167-residue stretch at 453 to 619 (EYLDSGWNLN…LGRQCVEHYR (167 aa)) folds into the JmjC domain. Fe cation-binding residues include His-499 and Glu-501. Positions 507, 509, and 517 each coordinate 2-oxoglutarate. His-587 is a binding site for Fe cation. Residues 692 to 744 (CIKCKTTCFMSAISCSCKPGLLVCLHHVKELCSCPPYKYNLRYRYTLDDLYPM) form a C5HC2 zinc finger. Lys-769 is covalently cross-linked (Glycyl lysine isopeptide (Lys-Gly) (interchain with G-Cter in SUMO2)). Lys-832 carries the N6-acetyllysine modification. At Ser-986 the chain carries Phosphoserine. The PHD-type 2 zinc finger occupies 1176 to 1224 (MKVCLCQKTPATPMIQCELCRDAFHTSCVAAPSISQSSRIWLCPHCRRS). The segment covering 1297–1314 (QASATDKVSQPPGTTSFS) has biased composition (polar residues). The interval 1297-1318 (QASATDKVSQPPGTTSFSLPDD) is disordered. Ser-1328 is modified (phosphoserine). Residues 1374–1388 (PSSVQQADRSSPVRS) show a composition bias toward polar residues. The tract at residues 1374–1447 (PSSVQQADRS…IKLSHPKDMD (74 aa)) is disordered. The span at 1389–1427 (SSEKNDCLRGKRDAINSPERKLKRRPEREGLPSERWDRV) shows a compositional bias: basic and acidic residues. Residues 1428–1441 (KHMRTPQKKKIKLS) show a composition bias toward basic residues. Residue Lys-1450 forms a Glycyl lysine isopeptide (Lys-Gly) (interchain with G-Cter in SUMO2) linkage. Ser-1456 carries the post-translational modification Phosphoserine. The PHD-type 3 zinc finger occupies 1484–1538 (DAICPAVSCLQPEGDEVDWVQCDGSCNQWFHQVCVGVSPEMAEKEDYICVRCTGK).

This sequence belongs to the JARID1 histone demethylase family. As to quaternary structure, interacts with FOXG1B, PAX9, MYC, MYCN and RB1. Interacts with HDAC1, HDAC4, HDAC5 and HDAC7. Interacts (via PHD-type 1 zinc finger) with histone H3 unmodified at 'Lys-4'; the interaction is inhibited when histone H3 is methylated at 'Arg-2' or 'Lys-4'. Fe(2+) serves as cofactor. In terms of tissue distribution, present at highest levels in testis, where it is enriched in spermatogonia and pachytene cells (at protein level).

Its subcellular location is the nucleus. It carries out the reaction N(6),N(6),N(6)-trimethyl-L-lysyl(4)-[histone H3] + 3 2-oxoglutarate + 3 O2 = L-lysyl(4)-[histone H3] + 3 formaldehyde + 3 succinate + 3 CO2. In terms of biological role, histone demethylase that demethylates 'Lys-4' of histone H3, thereby playing a central role in histone code. Does not demethylate histone H3 'Lys-9' or H3 'Lys-27'. Demethylates trimethylated, dimethylated and monomethylated H3 'Lys-4'. Acts as a transcriptional corepressor for FOXG1B and PAX9. Represses the CLOCK-BMAL1 heterodimer-mediated transcriptional activation of the core clock component PER2. The polypeptide is Lysine-specific demethylase 5B (Kdm5b) (Mus musculus (Mouse)).